Consider the following 96-residue polypeptide: UPF0251 protein Ssed_3913 (96 aa).

This sequence belongs to the UPF0251 family.

In Shewanella sediminis (strain HAW-EB3), this protein is UPF0251 protein Ssed_3913.